We begin with the raw amino-acid sequence, 281 residues long: Diaminopimelate epimerase (281 aa).

Substrate is bound by residues asparagine 14 and asparagine 65. Cysteine 74 functions as the Proton donor in the catalytic mechanism. Substrate contacts are provided by residues 75 to 76 (GN), asparagine 165, asparagine 198, and 216 to 217 (ER). Residue cysteine 225 is the Proton acceptor of the active site. 226–227 (GT) serves as a coordination point for substrate.

This sequence belongs to the diaminopimelate epimerase family. In terms of assembly, homodimer.

It localises to the cytoplasm. The enzyme catalyses (2S,6S)-2,6-diaminopimelate = meso-2,6-diaminopimelate. The protein operates within amino-acid biosynthesis; L-lysine biosynthesis via DAP pathway; DL-2,6-diaminopimelate from LL-2,6-diaminopimelate: step 1/1. Functionally, catalyzes the stereoinversion of LL-2,6-diaminopimelate (L,L-DAP) to meso-diaminopimelate (meso-DAP), a precursor of L-lysine and an essential component of the bacterial peptidoglycan. The polypeptide is Diaminopimelate epimerase (Leptospira borgpetersenii serovar Hardjo-bovis (strain JB197)).